Reading from the N-terminus, the 451-residue chain is DNA double-strand break repair nuclease NurA (451 aa).

Positions 51 and 126 each coordinate Mn(2+).

The protein belongs to the NurA family. As to quaternary structure, homodimer. Interacts with HerA. Requires Mn(2+) as cofactor.

Exonuclease activity is stimulated in the presence of HerA. In terms of biological role, involved in DNA double-strand break (DSB) repair. Probably acts with HerA to stimulate resection of the 5' strand and produce the long 3' single-strand that is required for RadA loading. Exhibits 5' endonuclease activity and both 5' and 3' exonuclease activities. In Pyrococcus furiosus (strain ATCC 43587 / DSM 3638 / JCM 8422 / Vc1), this protein is DNA double-strand break repair nuclease NurA.